The following is a 278-amino-acid chain: Sulfur carrier protein FdhD (278 aa).

The active-site Cysteine persulfide intermediate is Cys121. 260–265 serves as a coordination point for Mo-bis(molybdopterin guanine dinucleotide); that stretch reads FCKPGR.

Belongs to the FdhD family.

It localises to the cytoplasm. Functionally, required for formate dehydrogenase (FDH) activity. Acts as a sulfur carrier protein that transfers sulfur from IscS to the molybdenum cofactor prior to its insertion into FDH. The chain is Sulfur carrier protein FdhD from Escherichia coli O127:H6 (strain E2348/69 / EPEC).